Reading from the N-terminus, the 403-residue chain is Cysteine desulfurase IscS (403 aa).

Pyridoxal 5'-phosphate contacts are provided by residues 75–76 (AT), Asn-155, Gln-183, and 203–205 (SAH). Lys-206 is modified (N6-(pyridoxal phosphate)lysine). Pyridoxal 5'-phosphate is bound at residue Thr-243. The active-site Cysteine persulfide intermediate is the Cys-328. Cys-328 contributes to the [2Fe-2S] cluster binding site.

It belongs to the class-V pyridoxal-phosphate-dependent aminotransferase family. NifS/IscS subfamily. As to quaternary structure, homodimer. Forms a heterotetramer with IscU, interacts with other sulfur acceptors. The cofactor is pyridoxal 5'-phosphate.

The protein resides in the cytoplasm. The enzyme catalyses (sulfur carrier)-H + L-cysteine = (sulfur carrier)-SH + L-alanine. The protein operates within cofactor biosynthesis; iron-sulfur cluster biosynthesis. Its function is as follows. Master enzyme that delivers sulfur to a number of partners involved in Fe-S cluster assembly, tRNA modification or cofactor biosynthesis. Catalyzes the removal of elemental sulfur atoms from cysteine to produce alanine. Functions as a sulfur delivery protein for Fe-S cluster synthesis onto IscU, an Fe-S scaffold assembly protein, as well as other S acceptor proteins. This is Cysteine desulfurase IscS from Psychromonas ingrahamii (strain DSM 17664 / CCUG 51855 / 37).